The following is a 384-amino-acid chain: Queuine tRNA-ribosyltransferase (384 aa).

D92 serves as the catalytic Proton acceptor. Substrate contacts are provided by residues 92-96 (DSGGF), D146, Q190, and G217. The RNA binding stretch occupies residues 248 to 254 (GVGRPED). D267 acts as the Nucleophile in catalysis. The RNA binding; important for wobble base 34 recognition stretch occupies residues 272 to 276 (TRHAR). Zn(2+) contacts are provided by C305, C307, C310, and H337.

This sequence belongs to the queuine tRNA-ribosyltransferase family. Homodimer. Within each dimer, one monomer is responsible for RNA recognition and catalysis, while the other monomer binds to the replacement base PreQ1. Zn(2+) is required as a cofactor.

It catalyses the reaction 7-aminomethyl-7-carbaguanine + guanosine(34) in tRNA = 7-aminomethyl-7-carbaguanosine(34) in tRNA + guanine. The protein operates within tRNA modification; tRNA-queuosine biosynthesis. Its function is as follows. Catalyzes the base-exchange of a guanine (G) residue with the queuine precursor 7-aminomethyl-7-deazaguanine (PreQ1) at position 34 (anticodon wobble position) in tRNAs with GU(N) anticodons (tRNA-Asp, -Asn, -His and -Tyr). Catalysis occurs through a double-displacement mechanism. The nucleophile active site attacks the C1' of nucleotide 34 to detach the guanine base from the RNA, forming a covalent enzyme-RNA intermediate. The proton acceptor active site deprotonates the incoming PreQ1, allowing a nucleophilic attack on the C1' of the ribose to form the product. After dissociation, two additional enzymatic reactions on the tRNA convert PreQ1 to queuine (Q), resulting in the hypermodified nucleoside queuosine (7-(((4,5-cis-dihydroxy-2-cyclopenten-1-yl)amino)methyl)-7-deazaguanosine). In Xylella fastidiosa (strain M12), this protein is Queuine tRNA-ribosyltransferase.